The primary structure comprises 507 residues: Ribonuclease Y (507 aa).

The chain crosses the membrane as a helical span at residues 1–21 (MLWYIVAGAGGLLIGYLIASY). The 86-residue stretch at 197–282 (TVSTVSLPSD…EMYEKAKQEV (86 aa)) folds into the KH domain. One can recognise an HD domain in the interval 323-416 (VLNHSIEVAL…VAAADALSAA (94 aa)).

The protein belongs to the RNase Y family.

The protein localises to the cell membrane. Its function is as follows. Endoribonuclease that initiates mRNA decay. This Thermotoga petrophila (strain ATCC BAA-488 / DSM 13995 / JCM 10881 / RKU-1) protein is Ribonuclease Y.